The sequence spans 397 residues: Putative serine/threonine-protein kinase R301 (397 aa).

Residues 25 to 397 (QIKSTSVGSG…IIRHFNSPRL (373 aa)) form the Protein kinase domain. ATP is bound by residues 31 to 39 (VGSGGSDNI) and K53. The active-site Proton acceptor is the D218.

Belongs to the protein kinase superfamily. Ser/Thr protein kinase family.

Its subcellular location is the virion. It carries out the reaction L-seryl-[protein] + ATP = O-phospho-L-seryl-[protein] + ADP + H(+). The enzyme catalyses L-threonyl-[protein] + ATP = O-phospho-L-threonyl-[protein] + ADP + H(+). This chain is Putative serine/threonine-protein kinase R301, found in Acanthamoeba polyphaga (Amoeba).